The primary structure comprises 421 residues: MKIQAPKGTKDVLPEESYMWQYVENKFREVCKLYGYQEVRFPTFEYTELFQRGVGDTTDIVQKEMYTFLDKGGRSITLRPEGTASTARLFIEHGFASRPMPQRFYYIISAFRYENTQGGRFREFHQFGIENFGSSSPVTDAEVISLAYNFFTSLGLDNITVNINSIGCPVCRKEYVKNLKEYFSANSQKLCHTCHQRLDKNPMRILDCKEEGCKLITKDAPKPIDYLCDDCKSHFESVKTYLDSAMVSYKVDPFIVRGLDYYTKTVFEIVATVSDKELAICGGGRYDNLIEQIGGPSIAGIGFAIGVERLLMLLEQNGLLPARSQVPRVFVATIGENGIKKAFEIARMLRFEGISTVVEEMGRSLKSQMKYADKIGCEFSIIIGDDEIEKGVCKVRNMKTSSEEIVEIENICEYLKEKLQK.

This sequence belongs to the class-II aminoacyl-tRNA synthetase family. Homodimer.

The protein localises to the cytoplasm. It catalyses the reaction tRNA(His) + L-histidine + ATP = L-histidyl-tRNA(His) + AMP + diphosphate + H(+). In Caldicellulosiruptor bescii (strain ATCC BAA-1888 / DSM 6725 / KCTC 15123 / Z-1320) (Anaerocellum thermophilum), this protein is Histidine--tRNA ligase.